Here is a 507-residue protein sequence, read N- to C-terminus: MVTIRADEISNIIRERIEQYNREVTIVNTGTVLQVGDGIARIYGLDEVMAGELVEFEEGTIGIALNLESNNVGVVLMGDGLMIQEGSSVKATGKIAQIPVSEAYLGRVINALANPIDGRGKISASESRLIESPAPGIISRRSVYEPLQTGLIAIDSMIPIGRGQRELIIGDRQTGKTAVATDTILNQQGQNVICVYVAIGQKASSVAQVVTSLQERGAMEYTIVVAETADSPATLQYLAPYTGAALAEYFMYREQHTLIIYDDLSKQAQAYRQMSLLLRRPPGREAYPGDVFYLHSRLLERAAKLSSQLGEGSMTALPIVETQSGDVSAYIPTNVISITDGQIFLSADLFNAGIRPAINVGISVSRVGSAAQIKAMKQVAGKLKLELAQFAELEAFSQFSSDLDKATQNQLARGQRLRELLKQSQSAPLTVEEQIMTIYTGTNGYLDGLEIGQVRKFLVQLRTYLKTNKPQFQEIISSTKTLTAEAESFLKEGIQEQLERFLLLEKL.

An ATP-binding site is contributed by 170-177; it reads GDRQTGKT. The residue at position 257 (T257) is a Phosphothreonine.

Belongs to the ATPase alpha/beta chains family. F-type ATPases have 2 components, CF(1) - the catalytic core - and CF(0) - the membrane proton channel. CF(1) has five subunits: alpha(3), beta(3), gamma(1), delta(1), epsilon(1). CF(0) has four main subunits: a, b, b' and c.

It localises to the plastid. The protein localises to the chloroplast thylakoid membrane. The catalysed reaction is ATP + H2O + 4 H(+)(in) = ADP + phosphate + 5 H(+)(out). Produces ATP from ADP in the presence of a proton gradient across the membrane. The alpha chain is a regulatory subunit. This Draba nemorosa (Woodland whitlowgrass) protein is ATP synthase subunit alpha, chloroplastic.